The sequence spans 310 residues: GPN-loop GTPase 2 (310 aa).

Position 2 is an N-acetylalanine (A2). 19 to 24 (GSGKTT) contributes to the GTP binding site. The Gly-Pro-Asn (GPN)-loop; involved in dimer interface signature appears at 76–78 (GPN). 178 to 181 (SKMD) is a binding site for GTP.

This sequence belongs to the GPN-loop GTPase family. As to quaternary structure, heterodimers with GPN1 or GPN3. Binds to RNA polymerase II (RNAPII).

Functionally, small GTPase required for proper localization of RNA polymerase II and III (RNAPII and RNAPIII). May act at an RNAP assembly step prior to nuclear import. The protein is GPN-loop GTPase 2 of Mus musculus (Mouse).